A 535-amino-acid polypeptide reads, in one-letter code: Interferon lambda receptor 1 (535 aa).

Residues 1–20 form the signal peptide; that stretch reads MWRADRWAPLLLFLLQSALG. Topologically, residues 21–227 are extracellular; the sequence is RPRLAPPRNV…FLEAPGDKRA (207 aa). The 96-residue stretch at 26–121 folds into the Fibronectin type-III domain; the sequence is PPRNVTLFSQ…ESRYLEYLFD (96 aa). N-linked (GlcNAc...) asparagine glycosylation is found at Asn-29, Asn-36, and Asn-52. 3 disulfides stabilise this stretch: Cys-73–Cys-81, Cys-85–Cys-149, and Cys-194–Cys-216. A glycan (N-linked (GlcNAc...) asparagine) is linked at Asn-141. The chain crosses the membrane as a helical span at residues 228–248; sequence VLAMPSLLLLLIAAVAAGVAW. Residues 249 to 535 are Cytoplasmic-facing; sequence KIMKGNPWFQ…GRMLGDYLVR (287 aa). 2 disordered regions span residues 301 to 419 and 478 to 520; these read NRPA…APCG and VNNP…SSVQ. Positions 321-336 are enriched in acidic residues; sequence STEDEDEDTDYDDDGD. Over residues 350-360 the composition is skewed to basic and acidic residues; that stretch reads EKPRVMEHSET. Positions 376–396 are enriched in low complexity; sequence GSDGSSAWDSSDRSWSSTGDS. The segment covering 397–414 has biased composition (basic and acidic residues); sequence SYKDEVGSSSCLDRKEPD. Residues 482-503 are compositionally biased toward acidic residues; it reads EGEEEQEDEEEEEEEEEEEDWE.

It belongs to the type II cytokine receptor family. As to quaternary structure, heterodimer with IL10RB. Post-translationally, ubiquitinated by FBXO45-containing E3 ligase leading to proteasomal degradation.

It is found in the membrane. In terms of biological role, the IFNLR1/IL10RB dimer is a receptor for the cytokine ligands IFNL2 and IFNL3 and mediates their antiviral activity. The ligand/receptor complex stimulate the activation of the JAK/STAT signaling pathway leading to the expression of IFN-stimulated genes (ISG), which contribute to the antiviral state. Determines the cell type specificity of the lambda interferon action. Shows a more restricted pattern of expression in the epithelial tissues thereby limiting responses to lambda interferons primarily to epithelial cells of the respiratory, gastrointestinal, and reproductive tracts. Seems not to be essential for early virus-activated host defense in vaginal infection, but plays an important role in Toll-like receptor (TLR)-induced antiviral defense. Plays a significant role in the antiviral immune defense in the intestinal epithelium. This Mus musculus (Mouse) protein is Interferon lambda receptor 1 (Ifnlr1).